We begin with the raw amino-acid sequence, 263 residues long: 4-hydroxy-tetrahydrodipicolinate reductase (263 aa).

NAD(+) contacts are provided by residues 8–13 (GACGKM), D34, 97–99 (GTT), and 123–126 (APNF). The active-site Proton donor/acceptor is the H153. H154 is a (S)-2,3,4,5-tetrahydrodipicolinate binding site. Catalysis depends on K157, which acts as the Proton donor. 163 to 164 (GT) provides a ligand contact to (S)-2,3,4,5-tetrahydrodipicolinate.

It belongs to the DapB family.

It localises to the cytoplasm. It catalyses the reaction (S)-2,3,4,5-tetrahydrodipicolinate + NAD(+) + H2O = (2S,4S)-4-hydroxy-2,3,4,5-tetrahydrodipicolinate + NADH + H(+). The enzyme catalyses (S)-2,3,4,5-tetrahydrodipicolinate + NADP(+) + H2O = (2S,4S)-4-hydroxy-2,3,4,5-tetrahydrodipicolinate + NADPH + H(+). The protein operates within amino-acid biosynthesis; L-lysine biosynthesis via DAP pathway; (S)-tetrahydrodipicolinate from L-aspartate: step 4/4. Catalyzes the conversion of 4-hydroxy-tetrahydrodipicolinate (HTPA) to tetrahydrodipicolinate. This Carboxydothermus hydrogenoformans (strain ATCC BAA-161 / DSM 6008 / Z-2901) protein is 4-hydroxy-tetrahydrodipicolinate reductase.